Here is a 78-residue protein sequence, read N- to C-terminus: Large ribosomal subunit protein bL28 (78 aa).

It belongs to the bacterial ribosomal protein bL28 family.

The polypeptide is Large ribosomal subunit protein bL28 (Synechococcus sp. (strain WH7803)).